A 274-amino-acid chain; its full sequence is MHLLRTLLLRSNTSNISLLTKCAFRACPLQKWPVSLRSGCQVSVLPTQQKKWLHSQPKQQDSSTKTPVHDLPSGSQHQSEESSPSAKSSISTDTSIVAETDPLQDQSIGLLKRFKKTFKQHGKVLIPVHLVTSSFWFGSFYYAAMKGVNVVPFLEFIGLPDVIVNILKNSQGGNALTAYAMYKIATPARYTVTLGGTSLSVKYLRKYGYLSTPPLVKDYFQDRMEETKELFTEKMEETRDIISGKMEETKDRISEKLQETKDRVAFRKKKNEEM.

The span at 51–66 (KWLHSQPKQQDSSTKT) shows a compositional bias: polar residues. The disordered stretch occupies residues 51 to 91 (KWLHSQPKQQDSSTKTPVHDLPSGSQHQSEESSPSAKSSIS). Residues 81–91 (ESSPSAKSSIS) are compositionally biased toward low complexity. In terms of domain architecture, DUF1279 spans 105–217 (DQSIGLLKRF…GYLSTPPLVK (113 aa)). The helical transmembrane segment at 124–144 (VLIPVHLVTSSFWFGSFYYAA) threads the bilayer. The stretch at 221-274 (QDRMEETKELFTEKMEETRDIISGKMEETKDRISEKLQETKDRVAFRKKKNEEM) forms a coiled coil.

This sequence belongs to the FAM210 family.

The protein resides in the membrane. The protein localises to the mitochondrion. It localises to the cytoplasm. May play a role in the structure and strength of both muscle and bone. The protein is Protein FAM210A (fam210a) of Xenopus tropicalis (Western clawed frog).